The primary structure comprises 205 residues: Adenylyl-sulfate kinase (205 aa).

Residue 31–38 participates in ATP binding; it reads GLSGAGKS. The Phosphoserine intermediate role is filled by serine 105.

It belongs to the APS kinase family.

The catalysed reaction is adenosine 5'-phosphosulfate + ATP = 3'-phosphoadenylyl sulfate + ADP + H(+). The protein operates within sulfur metabolism; hydrogen sulfide biosynthesis; sulfite from sulfate: step 2/3. Functionally, catalyzes the synthesis of activated sulfate. The polypeptide is Adenylyl-sulfate kinase (Shewanella sp. (strain MR-7)).